A 431-amino-acid chain; its full sequence is C2H2 type master regulator of conidiophore development brlA (431 aa).

Disordered regions lie at residues 29–51 (MTSSFSPLESPTPTPTSLYSHGS), 211–275 (TPQQ…SEEY), and 287–306 (IRTHRQPSRKPSKKQLVRSN). Over residues 30–48 (TSSFSPLESPTPTPTSLYS) the composition is skewed to low complexity. A compositionally biased stretch (polar residues) spans 225-265 (PSSNYSDFPASLQTFKPHTPSTPVRSLSLGTPRSDTPQSRM). Basic residues predominate over residues 287–302 (IRTHRQPSRKPSKKQL). 2 consecutive C2H2-type zinc fingers follow at residues 321–345 (FKCKEPGCKGRFKRQEHLKRHMKSH) and 351–376 (HVCWVPGCHRAFSRSDNLNAHYTKTH). Positions 390–412 (DETSPDYDPEFRGQLTPDGRPIY) are disordered.

Its subcellular location is the nucleus. In terms of biological role, brlA, abaA and wetA are pivotal regulators of conidiophore development and conidium maturation. They act individually and together to regulate their own expression and that of numerous other sporulation-specific genes. Binds promoters of target genes at brlA response elements (BREs) containing the conserved sequence 5'-(C/A)(A/G)AGGG(G/A)-3'. Regulates the expression levels of seven secondary metabolism gene clusters including a down-regulated cluster putatively involved in the biosynthesis of the mycotoxins roquefortine C and meleagrin. Negatively regulates the expression of cellulase genes. This chain is C2H2 type master regulator of conidiophore development brlA, found in Penicillium oxalicum (strain 114-2 / CGMCC 5302) (Penicillium decumbens).